The chain runs to 351 residues: Phospho-N-acetylmuramoyl-pentapeptide-transferase (351 aa).

The next 10 membrane-spanning stretches (helical) occupy residues 17 to 37, 61 to 83, 88 to 105, 130 to 150, 158 to 178, 190 to 210, 230 to 250, 254 to 274, 279 to 299, and 328 to 348; these read TAYATIFAFLLALIFGPFIIS, MGIPTMGGVLIFFCVLVSLFFWI, IYFLIVLFVMVSFACLGF, ILFSFISVVMLYYFGGEHVSI, SLKLDLGILYIPFGMFVLISA, GLAIGLSIVVIGALIIIAYLT, LVIFLGALLGGSFGFLWFNAY, IMMGDTGSLSIGAVLGMVALI, ILFAILAGVFVVETLSVIIQV, and QVVIRFWIIGLIFAILALSTI.

It belongs to the glycosyltransferase 4 family. MraY subfamily. Requires Mg(2+) as cofactor.

The protein localises to the cell inner membrane. The catalysed reaction is UDP-N-acetyl-alpha-D-muramoyl-L-alanyl-gamma-D-glutamyl-meso-2,6-diaminopimeloyl-D-alanyl-D-alanine + di-trans,octa-cis-undecaprenyl phosphate = di-trans,octa-cis-undecaprenyl diphospho-N-acetyl-alpha-D-muramoyl-L-alanyl-D-glutamyl-meso-2,6-diaminopimeloyl-D-alanyl-D-alanine + UMP. The protein operates within cell wall biogenesis; peptidoglycan biosynthesis. Catalyzes the initial step of the lipid cycle reactions in the biosynthesis of the cell wall peptidoglycan: transfers peptidoglycan precursor phospho-MurNAc-pentapeptide from UDP-MurNAc-pentapeptide onto the lipid carrier undecaprenyl phosphate, yielding undecaprenyl-pyrophosphoryl-MurNAc-pentapeptide, known as lipid I. The chain is Phospho-N-acetylmuramoyl-pentapeptide-transferase from Borrelia recurrentis (strain A1).